The chain runs to 489 residues: Beta-dihydromenaquinone-9 omega-hydroxylase (489 aa).

Heme is bound at residue Cys435.

It belongs to the cytochrome P450 family. Requires heme as cofactor.

The protein localises to the cytoplasm. The enzyme catalyses beta-dihydromenaquinone-9 + 2 reduced [2Fe-2S]-[ferredoxin] + O2 + 2 H(+) = omega-hydroxy-beta-dihydromenaquinone-9 + 2 oxidized [2Fe-2S]-[ferredoxin] + H2O. Involved in the biosynthesis of sulfomenaquinone (SMK, initially named S881 on the basis of its mass), which is localized in the outer envelope of M.bovis and negatively regulates its virulence. Catalyzes the hydroxylation of beta-dihydromenaquinone-9, leading to the formation of omega-hydroxy-beta-dihydromenaquinone-9. The chain is Beta-dihydromenaquinone-9 omega-hydroxylase (cyp128) from Mycobacterium bovis (strain ATCC BAA-935 / AF2122/97).